A 192-amino-acid polypeptide reads, in one-letter code: Chromophore lyase CpcS/CpeS 2 (192 aa).

This sequence belongs to the CpcS/CpeS biliprotein lyase family.

In terms of biological role, covalently attaches a chromophore to Cys residue(s) of phycobiliproteins. The protein is Chromophore lyase CpcS/CpeS 2 of Synechocystis sp. (strain ATCC 27184 / PCC 6803 / Kazusa).